A 305-amino-acid polypeptide reads, in one-letter code: Protoheme IX farnesyltransferase (305 aa).

9 helical membrane-spanning segments follow: residues 31–51 (VMSL…YSVH), 52–72 (PFIA…AGAI), 102–119 (ALSF…FMAL), 123–145 (LLAS…IWLK), 151–171 (NIVI…AAVS), 179–199 (IILF…LALF), 218–238 (ILYT…VSLM), 240–260 (FFIG…GLVF), and 281–301 (FAYS…TSTI).

The protein belongs to the UbiA prenyltransferase family. Protoheme IX farnesyltransferase subfamily.

The protein resides in the cell inner membrane. The catalysed reaction is heme b + (2E,6E)-farnesyl diphosphate + H2O = Fe(II)-heme o + diphosphate. The protein operates within porphyrin-containing compound metabolism; heme O biosynthesis; heme O from protoheme: step 1/1. Its function is as follows. Converts heme B (protoheme IX) to heme O by substitution of the vinyl group on carbon 2 of heme B porphyrin ring with a hydroxyethyl farnesyl side group. This is Protoheme IX farnesyltransferase from Rickettsia akari (strain Hartford).